The chain runs to 351 residues: ADP-glucose phosphorylase (351 aa).

Residues 1-63 are disordered; it reads MTSPSHASDR…QNPNPKPSSC (63 aa). 41 to 44 serves as a coordination point for ADP-alpha-D-glucose; sequence RAKR. Zn(2+) contacts are provided by Cys63 and Cys66. ADP-alpha-D-glucose contacts are provided by residues 72-74 and Asn94; that span reads ECA. Zn(2+) is bound at residue His133. ADP-alpha-D-glucose-binding positions include Asn173 and 179-182; that span reads GASM. Zn(2+) is bound at residue His184. His186 functions as the Tele-AMP-histidine intermediate in the catalytic mechanism. Gln188 serves as a coordination point for ADP-alpha-D-glucose. Zn(2+)-binding residues include Cys216, Cys219, His255, and His310. ADP-alpha-D-glucose contacts are provided by residues Gly321 and 325–326; that span reads FE.

Belongs to the galactose-1-phosphate uridylyltransferase type 1 family. As to quaternary structure, homodimer. Zn(2+) serves as cofactor.

The catalysed reaction is alpha-D-glucose 1-phosphate + ADP + H(+) = ADP-alpha-D-glucose + phosphate. In terms of biological role, catalyzes the conversion of ADP-glucose and inorganic phosphate (Pi) into glucose-1-phosphate and ADP. Does not possess galactose-1-phosphate uridylyltransferase activity. The sequence is that of ADP-glucose phosphorylase from Arabidopsis thaliana (Mouse-ear cress).